Consider the following 324-residue polypeptide: Signal peptidase I (324 aa).

Methionine 1 carries the blocked amino end (Met) modification. At methionine 1–asparagine 3 the chain is on the periplasmic side. The helical transmembrane segment at methionine 4–valine 22 threads the bilayer. Residues aspartate 23–proline 58 are Cytoplasmic-facing. The helical transmembrane segment at glycine 59–valine 77 threads the bilayer. At arginine 78–histidine 324 the chain is on the periplasmic side. Active-site residues include serine 91 and lysine 146. An intrachain disulfide couples cysteine 171 to cysteine 177.

Belongs to the peptidase S26 family.

The protein localises to the cell inner membrane. It carries out the reaction Cleavage of hydrophobic, N-terminal signal or leader sequences from secreted and periplasmic proteins.. This chain is Signal peptidase I (lepB), found in Escherichia coli (strain K12).